A 213-amino-acid polypeptide reads, in one-letter code: LexA repressor (213 aa).

Residues 29 to 49 (RAEIAQALGFRSPNAAEDHLK) constitute a DNA-binding region (H-T-H motif). Active-site for autocatalytic cleavage activity residues include S131 and K168.

Belongs to the peptidase S24 family. As to quaternary structure, homodimer.

It catalyses the reaction Hydrolysis of Ala-|-Gly bond in repressor LexA.. Functionally, represses a number of genes involved in the response to DNA damage (SOS response), including recA and lexA. In the presence of single-stranded DNA, RecA interacts with LexA causing an autocatalytic cleavage which disrupts the DNA-binding part of LexA, leading to derepression of the SOS regulon and eventually DNA repair. The polypeptide is LexA repressor (Bordetella avium (strain 197N)).